Consider the following 422-residue polypeptide: 4-hydroxy-3-methylbut-2-en-1-yl diphosphate synthase (flavodoxin) (422 aa).

Residues Cys-316, Cys-319, Cys-362, and Glu-369 each contribute to the [4Fe-4S] cluster site.

It belongs to the IspG family. Requires [4Fe-4S] cluster as cofactor.

It carries out the reaction (2E)-4-hydroxy-3-methylbut-2-enyl diphosphate + oxidized [flavodoxin] + H2O + 2 H(+) = 2-C-methyl-D-erythritol 2,4-cyclic diphosphate + reduced [flavodoxin]. It functions in the pathway isoprenoid biosynthesis; isopentenyl diphosphate biosynthesis via DXP pathway; isopentenyl diphosphate from 1-deoxy-D-xylulose 5-phosphate: step 5/6. Converts 2C-methyl-D-erythritol 2,4-cyclodiphosphate (ME-2,4cPP) into 1-hydroxy-2-methyl-2-(E)-butenyl 4-diphosphate. This Ehrlichia canis (strain Jake) protein is 4-hydroxy-3-methylbut-2-en-1-yl diphosphate synthase (flavodoxin).